Consider the following 165-residue polypeptide: Cell division protein SepF (165 aa).

The disordered stretch occupies residues 23–75 (DEYGDYAGDYETQETAPVATRSSKRESRPAPVSDLSERRRPASGPTGVVAELS).

It belongs to the SepF family. In terms of assembly, homodimer. Interacts with FtsZ.

The protein resides in the cytoplasm. Its function is as follows. Cell division protein that is part of the divisome complex and is recruited early to the Z-ring. Probably stimulates Z-ring formation, perhaps through the cross-linking of FtsZ protofilaments. Its function overlaps with FtsA. The sequence is that of Cell division protein SepF from Nocardioides sp. (strain ATCC BAA-499 / JS614).